The following is a 502-amino-acid chain: Glycerol kinase (502 aa).

T14 contributes to the ADP binding site. ATP is bound by residues T14, T15, and S16. T14 serves as a coordination point for sn-glycerol 3-phosphate. R18 provides a ligand contact to ADP. Residues R84, E85, Y137, and D247 each coordinate sn-glycerol 3-phosphate. The glycerol site is built by R84, E85, Y137, D247, and Q248. Positions 269 and 312 each coordinate ADP. ATP-binding residues include T269, G312, Q316, and G413. 2 residues coordinate ADP: G413 and N417.

The protein belongs to the FGGY kinase family. Homotetramer and homodimer (in equilibrium). Heterodimer with EIIA-Glc. Binds 1 zinc ion per glycerol kinase EIIA-Glc dimer. The zinc ion is important for dimerization.

It catalyses the reaction glycerol + ATP = sn-glycerol 3-phosphate + ADP + H(+). The protein operates within polyol metabolism; glycerol degradation via glycerol kinase pathway; sn-glycerol 3-phosphate from glycerol: step 1/1. Activity of this regulatory enzyme is affected by several metabolites. Allosterically and non-competitively inhibited by fructose 1,6-bisphosphate (FBP) and unphosphorylated phosphocarrier protein EIIA-Glc (III-Glc), an integral component of the bacterial phosphotransferase (PTS) system. In terms of biological role, key enzyme in the regulation of glycerol uptake and metabolism. Catalyzes the phosphorylation of glycerol to yield sn-glycerol 3-phosphate. In Photorhabdus laumondii subsp. laumondii (strain DSM 15139 / CIP 105565 / TT01) (Photorhabdus luminescens subsp. laumondii), this protein is Glycerol kinase.